The sequence spans 415 residues: Serine hydroxymethyltransferase 1 (415 aa).

Residues Leu117 and 121–123 (GHL) each bind (6S)-5,6,7,8-tetrahydrofolate. Lys225 carries the post-translational modification N6-(pyridoxal phosphate)lysine. 349 to 351 (SPF) is a (6S)-5,6,7,8-tetrahydrofolate binding site.

It belongs to the SHMT family. As to quaternary structure, homodimer. Pyridoxal 5'-phosphate is required as a cofactor.

It is found in the cytoplasm. It catalyses the reaction (6R)-5,10-methylene-5,6,7,8-tetrahydrofolate + glycine + H2O = (6S)-5,6,7,8-tetrahydrofolate + L-serine. Its pathway is one-carbon metabolism; tetrahydrofolate interconversion. It participates in amino-acid biosynthesis; glycine biosynthesis; glycine from L-serine: step 1/1. Functionally, catalyzes the reversible interconversion of serine and glycine with tetrahydrofolate (THF) serving as the one-carbon carrier. This reaction serves as the major source of one-carbon groups required for the biosynthesis of purines, thymidylate, methionine, and other important biomolecules. Also exhibits THF-independent aldolase activity toward beta-hydroxyamino acids, producing glycine and aldehydes, via a retro-aldol mechanism. This chain is Serine hydroxymethyltransferase 1, found in Sulfurimonas denitrificans (strain ATCC 33889 / DSM 1251) (Thiomicrospira denitrificans (strain ATCC 33889 / DSM 1251)).